The following is a 123-amino-acid chain: Small ribosomal subunit protein uS12 (123 aa).

The tract at residues 1-31 is disordered; that stretch reads MPTIQQLVRKGRHSKKAKVATAGLKGSPQRR. A compositionally biased stretch (basic residues) spans 9 to 18; sequence RKGRHSKKAK. Asp-89 bears the 3-methylthioaspartic acid mark.

The protein belongs to the universal ribosomal protein uS12 family. In terms of assembly, part of the 30S ribosomal subunit. Contacts proteins S8 and S17. May interact with IF1 in the 30S initiation complex.

With S4 and S5 plays an important role in translational accuracy. In terms of biological role, interacts with and stabilizes bases of the 16S rRNA that are involved in tRNA selection in the A site and with the mRNA backbone. Located at the interface of the 30S and 50S subunits, it traverses the body of the 30S subunit contacting proteins on the other side and probably holding the rRNA structure together. The combined cluster of proteins S8, S12 and S17 appears to hold together the shoulder and platform of the 30S subunit. The sequence is that of Small ribosomal subunit protein uS12 from Corynebacterium aurimucosum (strain ATCC 700975 / DSM 44827 / CIP 107346 / CN-1) (Corynebacterium nigricans).